A 524-amino-acid polypeptide reads, in one-letter code: RNA-binding protein 39 (524 aa).

The disordered stretch occupies residues 1-146 (MADDIDIEAM…PVREPIDNLT (146 aa)). A2 is modified (N-acetylalanine). Residues 14–32 (PYKKDENKLSSANGHEERS) show a composition bias toward basic and acidic residues. 2 stretches are compositionally biased toward basic residues: residues 33 to 56 (KKRK…KERK) and 64 to 95 (KKSK…RGRY). Y95 carries the phosphotyrosine modification. Residues S97 and S100 each carry the phosphoserine modification. K111 participates in a covalent cross-link: Glycyl lysine isopeptide (Lys-Gly) (interchain with G-Cter in SUMO2). At S117 the chain carries Phosphoserine. K119 participates in a covalent cross-link: Glycyl lysine isopeptide (Lys-Gly) (interchain with G-Cter in SUMO2). Residues 119–130 (KLSRRRSRSKSP) show a composition bias toward basic residues. Phosphoserine is present on residues S121 and S136. Residues 131–146 (FRKDKSPVREPIDNLT) show a composition bias toward basic and acidic residues. A Phosphothreonine modification is found at T146. The RRM 1 domain occupies 153–230 (RTVFCMQLAA…VPIIVQASQA (78 aa)). Residue K244 forms a Glycyl lysine isopeptide (Lys-Gly) (interchain with G-Cter in SUMO2) linkage. An RRM 2 domain is found at 250-328 (MRLYVGSLHF…RPMKVGHVTE (79 aa)). The tract at residues 291–355 (KGYGFITFSD…RTGIDLGTTG (65 aa)) is activating domain. The segment at 291 to 400 (KGYGFITFSD…ADLQTRLSQQ (110 aa)) is interaction with JUN. Residues S334, S337, and S341 each carry the phosphoserine modification. Residues 355–400 (GRLQLMARLAEGTGLQIPPAAQQALQMSGSLAFGAVADLQTRLSQQ) form an interaction with ESR1 and ESR2 region. An interaction with NCOA6 region spans residues 400-524 (QTEASALAAA…ATQLLVPSRR (125 aa)). The 64-residue stretch at 439-502 (EIKDDVIEEC…KMITAAYVPL (64 aa)) folds into the RRM 3 domain.

Belongs to the splicing factor SR family. As to quaternary structure, interacts with NCOA6 and JUN. Interacts with ESR1 and ESR2, in the presence of estradiol (E2). Interacts with RSRC1 (via Arg/Ser-rich domain). Interacts with SF3B1. Interacts with ZNF106 (via N-terminus).

Its subcellular location is the nucleus speckle. Functionally, RNA-binding protein that acts as a pre-mRNA splicing factor. Acts by promoting exon inclusion via regulation of exon cassette splicing. Also acts as a transcriptional coactivator for steroid nuclear receptors ESR1/ER-alpha and ESR2/ER-beta, and JUN/AP-1, independently of the pre-mRNA splicing factor activity. The sequence is that of RNA-binding protein 39 (RBM39) from Pongo abelii (Sumatran orangutan).